Here is a 366-residue protein sequence, read N- to C-terminus: Ribosome-binding ATPase YchF (366 aa).

The region spanning 3 to 259 (LTAGIVGLPN…LEGEEKQMFL (257 aa)) is the OBG-type G domain. 12–17 (NVGKST) provides a ligand contact to ATP. Mg(2+)-binding residues include serine 16 and threonine 36. The TGS domain maps to 281–364 (GLATYFTAGE…QDGDVIHFRF (84 aa)).

The protein belongs to the TRAFAC class OBG-HflX-like GTPase superfamily. OBG GTPase family. YchF/OLA1 subfamily. It depends on Mg(2+) as a cofactor.

In terms of biological role, ATPase that binds to both the 70S ribosome and the 50S ribosomal subunit in a nucleotide-independent manner. This Bacillus subtilis (strain 168) protein is Ribosome-binding ATPase YchF.